A 232-amino-acid chain; its full sequence is Putative homeobox protein NANOG2 (232 aa).

Residues 1–10 (MDLPIEDSHD) are compositionally biased toward basic and acidic residues. The interval 1–39 (MDLPIEDSHDSSTSPKGKQPTTAEKSATKKEDKVPVKKQ) is disordered. Over residues 11-25 (SSTSPKGKQPTTAEK) the composition is skewed to polar residues. Residues 26–35 (SATKKEDKVP) show a composition bias toward basic and acidic residues. 8 consecutive repeat copies span residues 123 to 127 (WSNQT), 128 to 132 (WNNSI), 133 to 137 (WSNET), 143 to 147 (WSNHS), 148 to 152 (WNTQT), 153 to 157 (WCTQS), 158 to 162 (WNNQA), and 163 to 167 (WNSPF). Positions 123–167 (WSNQTWNNSIWSNETQNIQSWSNHSWNTQTWCTQSWNNQAWNSPF) are 8 X repeats starting with a Trp in each unit. A sufficient for transactivation activity region spans residues 123-167 (WSNQTWNNSIWSNETQNIQSWSNHSWNTQTWCTQSWNNQAWNSPF). The segment at 168-232 (YNCGEESLQS…YSTNMQPEDV (65 aa)) is sufficient for strong transactivation activity.

This sequence belongs to the Nanog homeobox family.

The protein resides in the nucleus. In terms of biological role, probable transcriptional regulator. The sequence is that of Putative homeobox protein NANOG2 (NANOGP1) from Pan troglodytes (Chimpanzee).